A 229-amino-acid polypeptide reads, in one-letter code: uncharacterized protein (229 aa).

The 228-residue stretch at 2–229 folds into the ABC transporter domain; that stretch reads LTLNNISKSY…LDERGDISHA (228 aa). 38–45 is a binding site for ATP; the sequence is GPSGSGKS.

The protein belongs to the ABC transporter superfamily.

This is an uncharacterized protein from Bacillus subtilis (strain 168).